The primary structure comprises 1173 residues: Paired amphipathic helix protein Sin3-like 6 (1173 aa).

Residues 40-75 (NQSAGESGRRLKMKRAREDVHTDTQKRKPEVSSRGE) form a disordered region. The segment covering 55-75 (AREDVHTDTQKRKPEVSSRGE) has biased composition (basic and acidic residues). 2 consecutive PAH domains span residues 79–148 (LPRT…LPKG) and 162–232 (IRVD…LPNC). 3 disordered regions span residues 236–337 (APST…TTKY), 655–697 (TASG…TAQP), and 740–813 (KHEL…ENNK). 2 stretches are compositionally biased toward basic and acidic residues: residues 264–276 (CKLE…SDQR) and 301–319 (RDYE…RTEK). Over residues 320-337 (SAASGSQDIGNHKSTTKY) the composition is skewed to polar residues. Polar residues predominate over residues 750–765 (PTASREQSNFEVNGQN). Residues 778–810 (RSNKDKQSCDKKGAKNKTRAEDDKQENCHKLSE) show a composition bias toward basic and acidic residues.

Its subcellular location is the nucleus. In terms of biological role, acts as a transcriptional repressor. Plays roles in regulating gene expression and genome stability. In Arabidopsis thaliana (Mouse-ear cress), this protein is Paired amphipathic helix protein Sin3-like 6 (SNL6).